The primary structure comprises 568 residues: ATP-dependent RNA helicase MRH4, mitochondrial (568 aa).

The transit peptide at 1 to 50 directs the protein to the mitochondrion; the sequence is MVSILAIRTFNPLGHFVSTQCVRAYAINSVRAGSKSSSVRAGSKNDTTRA. Over residues 36-49 the composition is skewed to polar residues; the sequence is SSSVRAGSKNDTTR. The disordered stretch occupies residues 36-64; the sequence is SSSVRAGSKNDTTRASSKKNKAGKSKLQL. Positions 143 to 150 match the Q motif motif; it reads EIHPSPIQ. The Helicase ATP-binding domain occupies 160 to 348; sequence NLMEPKLQVH…TKMFPNAIPL (189 aa). 173-180 is an ATP binding site; it reads AETGSGKT. The DEAD box signature appears at 296 to 299; it reads DEAD. In terms of domain architecture, Helicase C-terminal spans 379-568; sequence ALAQTLYAIA…TILKKNKALT (190 aa).

It belongs to the DEAD box helicase family. MRH4 subfamily.

It is found in the mitochondrion. The catalysed reaction is ATP + H2O = ADP + phosphate + H(+). ATP-binding RNA helicase involved in mitochondrial RNA metabolism. Required for maintenance of mitochondrial DNA. The polypeptide is ATP-dependent RNA helicase MRH4, mitochondrial (MRH4) (Candida glabrata (strain ATCC 2001 / BCRC 20586 / JCM 3761 / NBRC 0622 / NRRL Y-65 / CBS 138) (Yeast)).